The primary structure comprises 72 residues: MKIKILKFLKRKKWWEILVYILVVGFGFALFIGSIYDKWDKLIKWERYFILIYVSCKFVFLIWISLMYFIYN.

2 consecutive transmembrane segments (helical) span residues 15–35 (WEIL…IGSI) and 50–70 (ILIY…MYFI).

The protein localises to the host membrane. This is an uncharacterized protein from Spiroplasma melliferum (SpV1).